The sequence spans 335 residues: Ornithine carbamoyltransferase (335 aa).

Carbamoyl phosphate is bound by residues 56 to 59, glutamine 83, arginine 107, and 134 to 137; these read STRT and HPTQ. Residues asparagine 168, aspartate 232, and 236–237 each bind L-ornithine; that span reads SM. Residues 274 to 275 and arginine 320 each bind carbamoyl phosphate; that span reads CL.

Belongs to the aspartate/ornithine carbamoyltransferase superfamily. OTCase family.

Its subcellular location is the cytoplasm. The catalysed reaction is carbamoyl phosphate + L-ornithine = L-citrulline + phosphate + H(+). It participates in amino-acid biosynthesis; L-arginine biosynthesis; L-arginine from L-ornithine and carbamoyl phosphate: step 1/3. In terms of biological role, reversibly catalyzes the transfer of the carbamoyl group from carbamoyl phosphate (CP) to the N(epsilon) atom of ornithine (ORN) to produce L-citrulline. The sequence is that of Ornithine carbamoyltransferase from Pectobacterium atrosepticum (strain SCRI 1043 / ATCC BAA-672) (Erwinia carotovora subsp. atroseptica).